Consider the following 156-residue polypeptide: Ribosomal RNA large subunit methyltransferase H (156 aa).

Residues Leu-73, Gly-104, and 123-128 (IGPLTL) each bind S-adenosyl-L-methionine.

The protein belongs to the RNA methyltransferase RlmH family. In terms of assembly, homodimer.

It localises to the cytoplasm. The catalysed reaction is pseudouridine(1915) in 23S rRNA + S-adenosyl-L-methionine = N(3)-methylpseudouridine(1915) in 23S rRNA + S-adenosyl-L-homocysteine + H(+). In terms of biological role, specifically methylates the pseudouridine at position 1915 (m3Psi1915) in 23S rRNA. This is Ribosomal RNA large subunit methyltransferase H from Stenotrophomonas maltophilia (strain R551-3).